The sequence spans 318 residues: Methionyl-tRNA formyltransferase (318 aa).

Residue 110–113 participates in (6S)-5,6,7,8-tetrahydrofolate binding; it reads SLLP.

This sequence belongs to the Fmt family.

The enzyme catalyses L-methionyl-tRNA(fMet) + (6R)-10-formyltetrahydrofolate = N-formyl-L-methionyl-tRNA(fMet) + (6S)-5,6,7,8-tetrahydrofolate + H(+). Its function is as follows. Attaches a formyl group to the free amino group of methionyl-tRNA(fMet). The formyl group appears to play a dual role in the initiator identity of N-formylmethionyl-tRNA by promoting its recognition by IF2 and preventing the misappropriation of this tRNA by the elongation apparatus. This is Methionyl-tRNA formyltransferase from Latilactobacillus sakei subsp. sakei (strain 23K) (Lactobacillus sakei subsp. sakei).